We begin with the raw amino-acid sequence, 153 residues long: Ribosome maturation factor RimP (153 aa).

Belongs to the RimP family.

The protein resides in the cytoplasm. In terms of biological role, required for maturation of 30S ribosomal subunits. This chain is Ribosome maturation factor RimP, found in Actinobacillus pleuropneumoniae serotype 5b (strain L20).